The sequence spans 342 residues: UDP-N-acetylglucosamine--N-acetylmuramyl-(pentapeptide) pyrophosphoryl-undecaprenol N-acetylglucosamine transferase (342 aa).

UDP-N-acetyl-alpha-D-glucosamine contacts are provided by residues T10–G12, N124, S177, and Q275.

Belongs to the glycosyltransferase 28 family. MurG subfamily.

It is found in the cell inner membrane. It catalyses the reaction di-trans,octa-cis-undecaprenyl diphospho-N-acetyl-alpha-D-muramoyl-L-alanyl-D-glutamyl-meso-2,6-diaminopimeloyl-D-alanyl-D-alanine + UDP-N-acetyl-alpha-D-glucosamine = di-trans,octa-cis-undecaprenyl diphospho-[N-acetyl-alpha-D-glucosaminyl-(1-&gt;4)]-N-acetyl-alpha-D-muramoyl-L-alanyl-D-glutamyl-meso-2,6-diaminopimeloyl-D-alanyl-D-alanine + UDP + H(+). It functions in the pathway cell wall biogenesis; peptidoglycan biosynthesis. Functionally, cell wall formation. Catalyzes the transfer of a GlcNAc subunit on undecaprenyl-pyrophosphoryl-MurNAc-pentapeptide (lipid intermediate I) to form undecaprenyl-pyrophosphoryl-MurNAc-(pentapeptide)GlcNAc (lipid intermediate II). This chain is UDP-N-acetylglucosamine--N-acetylmuramyl-(pentapeptide) pyrophosphoryl-undecaprenol N-acetylglucosamine transferase, found in Campylobacter jejuni (strain RM1221).